A 282-amino-acid chain; its full sequence is Probable septum site-determining protein MinC (282 aa).

The tract at residues 103–147 (SQSRRGGKDEAPKEKAGKPEATAASGQTDAEAAGNTGKGKDSEGA) is disordered. Residues 104–120 (QSRRGGKDEAPKEKAGK) show a composition bias toward basic and acidic residues.

It belongs to the MinC family. Interacts with MinD and FtsZ.

In terms of biological role, cell division inhibitor that blocks the formation of polar Z ring septums. Rapidly oscillates between the poles of the cell to destabilize FtsZ filaments that have formed before they mature into polar Z rings. Prevents FtsZ polymerization. This chain is Probable septum site-determining protein MinC, found in Cupriavidus metallidurans (strain ATCC 43123 / DSM 2839 / NBRC 102507 / CH34) (Ralstonia metallidurans).